Here is a 94-residue protein sequence, read N- to C-terminus: Large ribosomal subunit protein bL27 (94 aa).

Positions 1–9 are excised as a propeptide; sequence MLKLNLQFF.

The protein belongs to the bacterial ribosomal protein bL27 family. Post-translationally, the N-terminus is cleaved by ribosomal processing cysteine protease Prp.

The chain is Large ribosomal subunit protein bL27 from Staphylococcus aureus (strain Mu3 / ATCC 700698).